Here is a 1505-residue protein sequence, read N- to C-terminus: Homeobox protein cut-like 1 (1505 aa).

A coiled-coil region spans residues 56 to 407 (LLKSFQGEID…ALRISNSDLS (352 aa)). Composition is skewed to polar residues over residues 396–407 (NAALRISNSDLS) and 440–451 (EQASNTNGTHQF). 4 disordered regions span residues 396-455 (NAAL…SPAG), 512-552 (YSTN…EEMD), 646-669 (PKRR…GSDE), and 682-704 (LQVQ…NSDD). The span at 516-546 (SISSQSPLQQSPDVNGMAPSPSQSESAGSVS) shows a compositional bias: low complexity. Glutamate 540 carries the post-translational modification Phosphoserine. A DNA-binding region (CUT 1) is located at residues 542 to 629 (AGSVSEGEEM…ILALRSIQGR (88 aa)). Low complexity predominate over residues 694–703 (SSASGSGNSD). Position 763 is a phosphoserine (serine 763). The tract at residues 768 to 802 (SAAPEAGASALPNPPALKKEAQDAPGLDPQGAADC) is disordered. Residues lysine 785, lysine 811, and lysine 842 each participate in a glycyl lysine isopeptide (Lys-Gly) (interchain with G-Cter in SUMO2) cross-link. Residues 815–853 (GRSGAWKDHWWSAVQPERRNAASSEEAKAEETGGGKEKG) are compositionally biased toward basic and acidic residues. Positions 815 to 930 (GRSGAWKDHW…KPTKPSVPPL (116 aa)) are disordered. 2 stretches are compositionally biased toward polar residues: residues 868-877 (SQLQGPSSSE) and 887-911 (SPYS…NSPL). Serine 909 bears the Phosphoserine mark. Positions 934 to 1021 (QYEVYMYQEV…QGVLPVQGQQ (88 aa)) form a DNA-binding region, CUT 2. Positions 1036 to 1049 (LQQGCVSSESTPKT) are enriched in polar residues. The tract at residues 1036 to 1110 (LQQGCVSSES…QPTTPLPLSG (75 aa)) is disordered. Residues 1050-1066 (SASCSPAPESPMSSSES) are compositionally biased toward low complexity. Phosphoserine occurs at positions 1059 and 1069. The segment at residues 1117 to 1204 (QELVAMSPEL…VEKLMDMKRM (88 aa)) is a DNA-binding region (CUT 3). The segment at 1210-1247 (MKRRHSSVSDSQPCEPPSVGTEYSQGASPQPQHQLKKP) is disordered. Polar residues predominate over residues 1230-1242 (TEYSQGASPQPQH). The segment at residues 1244–1303 (LKKPRVVLAPEEKEALKRAYQQKPYPSPKTIEDLATQLNLKTSTVINWFHNYRSRIRREL) is a DNA-binding region (homeobox). Serine 1270 bears the Phosphoserine mark. A Glycyl lysine isopeptide (Lys-Gly) (interchain with G-Cter in SUMO2) cross-link involves residue lysine 1284. Residues 1312–1480 (SQGQAGASDS…SRDNPLRKKK (169 aa)) form a disordered region. Residues 1316 to 1333 (AGASDSPSARSGRAAPSS) are compositionally biased toward low complexity. Serine 1337 bears the Phosphoserine mark. Composition is skewed to basic and acidic residues over residues 1353–1368 (EEPK…EVPR) and 1384–1394 (DDARDDDHEGG). Composition is skewed to low complexity over residues 1405–1436 (PASA…AAPS) and 1443–1455 (NSSS…RPSS). Serine 1455 is modified (phosphoserine). Positions 1467–1476 (GARDSRDNPL) are enriched in basic and acidic residues. Phosphoserine is present on residues serine 1486 and serine 1496.

This sequence belongs to the CUT homeobox family. In terms of assembly, interacts with BANP. Interacts with SATB1 (via DNA-binding domains); the interaction inhibits the attachment of both proteins to DNA. Phosphorylated by PKA. In terms of processing, as cells progress into S phase, a fraction of CUX1 molecules is proteolytically processed into N-terminally truncated proteins of 110 kDa by CTSL. Cell cycle-dependent processing of CUX1 serves to generate a CDP/Cux p110 with distinct DNA binding and transcriptional properties.

The protein localises to the nucleus. Functionally, transcription factor involved in the control of neuronal differentiation in the brain. Regulates dendrite development and branching, and dendritic spine formation in cortical layers II-III. Also involved in the control of synaptogenesis. In addition, it has probably a broad role in mammalian development as a repressor of developmentally regulated gene expression. May act by preventing binding of positively-activing CCAAT factors to promoters. Component of nf-munr repressor; binds to the matrix attachment regions (MARs) (5' and 3') of the immunoglobulin heavy chain enhancer. Represses T-cell receptor (TCR) beta enhancer function by binding to MARbeta, an ATC-rich DNA sequence located upstream of the TCR beta enhancer. Binds to the TH enhancer; may require the basic helix-loop-helix protein TCF4 as a coactivator. Its function is as follows. Plays a role in cell cycle progression, in particular at the G1/S transition. As cells progress into S phase, a fraction of CUX1 molecules is proteolytically processed into N-terminally truncated proteins of 110 kDa. While CUX1 only transiently binds to DNA and carries the CCAAT-displacement activity, CDP/Cux p110 makes a stable interaction with DNA and stimulates expression of genes such as POLA1. This Homo sapiens (Human) protein is Homeobox protein cut-like 1.